A 262-amino-acid polypeptide reads, in one-letter code: WUSCHEL-related homeobox 11 (262 aa).

Residues 1-11 (MDGGHSPDRHA) are compositionally biased toward basic and acidic residues. 2 disordered regions span residues 1–21 (MDGGHSPDRHAAAAAGEPVRS) and 79–115 (RRRQRQLQAQAQAAAAAASSGSPPTASSGGLAPGHAG). A DNA-binding region (homeobox) is located at residues 18 to 82 (PVRSRWTPKP…NRRSRSRRRQ (65 aa)). The segment covering 84–112 (QLQAQAQAAAAAASSGSPPTASSGGLAPG) has biased composition (low complexity).

Belongs to the WUS homeobox family. Interacts with ERF3.

It is found in the nucleus. Its function is as follows. Transcription factor which may be involved in developmental processes. Promotes the development of crown roots (both initiation and elongation), main components of the fibrous root system, by regulating the expression of genes required for crown root development and hormone-responsive genes involved in cytokinin (e.g. RR1, RR2, RR3 and RR4) and auxin (e.g. IAA5, IAA11, IAA23 and IAA31) signaling. In Oryza sativa subsp. indica (Rice), this protein is WUSCHEL-related homeobox 11.